A 332-amino-acid chain; its full sequence is Melanocortin receptor 4 (332 aa).

At 1 to 43 (MNSTHHHGMYTSLHLWNRSSYGLHGNASESLGKGHPDGGCYEQ) the chain is on the extracellular side. 3 N-linked (GlcNAc...) asparagine glycosylation sites follow: N2, N17, and N26. 2 disulfide bridges follow: C40–C279 and C271–C277. A helical transmembrane segment spans residues 44-69 (LFVSPEVFVTLGVISLLENILVIVAI). Over 70-81 (AKNKNLHSPMYF) the chain is Cytoplasmic. Residues 82 to 106 (FICSLAVADMLVSVSNGSETIVITL) form a helical membrane-spanning segment. Residue E100 participates in Ca(2+) binding. Residues 107 to 123 (LNSTDTDAQSFTVNIDN) are Extracellular-facing. N108 is a glycosylation site (N-linked (GlcNAc...) asparagine). Residues D122 and D126 each coordinate Ca(2+). The helical transmembrane segment at 124-145 (VIDSVICSSLLASICSLLSIAV) threads the bilayer. Topologically, residues 146-165 (DRYFTIFYALQYHNIMTVRR) are cytoplasmic. The chain crosses the membrane as a helical span at residues 166 to 186 (VGIIISCIWAACTVSGVLFII). Residues 187–191 (YSDSS) are Extracellular-facing. Residues 192–215 (AVIICLISMFFTMLVLMASLYVHM) traverse the membrane as a helical segment. Over 216 to 248 (FLMARLHIKRIAVLPGTGTIRQGTNMKGAITLT) the chain is Cytoplasmic. The chain crosses the membrane as a helical span at residues 249 to 271 (ILIGVFVVCWAPFFLHLLFYISC). Residues 272 to 280 (PQNPYCVCF) lie on the Extracellular side of the membrane. A helical membrane pass occupies residues 281–304 (MSHFNLYLILIMCNAVIDPLIYAL). Residues 305-332 (RSQELRKTFKEIICFYPLGGICELSSRY) lie on the Cytoplasmic side of the membrane. C318 carries S-palmitoyl cysteine lipidation.

The protein belongs to the G-protein coupled receptor 1 family. Homodimer; disulfide-linked, also forms higher order oligomers. Interacts with GNAS. Interacts with ATRNL1. Interacts with MGRN1; this interaction competes with GNAS-binding and thus inhibits agonist-induced cAMP production. Interacts with MRAP and MRAP2; these associated factors increase ligand-sensitivity and generation of cAMP.

Its subcellular location is the cell membrane. Its function is as follows. Hormone receptor that acts as a key component of the leptin-melanocortin pathway at the intersection of homeostatic maintenance of energetic state. Plays a role in regulating food intake: activation by a stimulating hormone such as anorexigenic alpha-melanocyte stimulating hormone (alpha-MSH) inhibits appetite, whereas binding to a natural antagonist like Agouti-related protein/AGRP promotes appetite. G-protein-coupled receptor that activates conventional Galphas signaling leading to induction of anorexogenic signaling in the hypothalamus to result in negative energy balance. Regulates the firing activity of neurons from the hypothalamus by alpha-MSH and AGRP independently of Galphas signaling by ligand-induced coupling of closure of inwardly rectifying potassium channel KCNJ13. In intestinal epithelial cells, plays a role in the inhibition of hepatic glucose production via nesfatin-1/NUCB2 leading to increased cyclic adenosine monophosphate (cAMP) levels and glucagon-like peptide 1 (GLP-1) secretion in the intestinal epithelium. The protein is Melanocortin receptor 4 (Mc4r) of Mus musculus (Mouse).